Here is a 244-residue protein sequence, read N- to C-terminus: tRNA (guanine-N(1)-)-methyltransferase (244 aa).

Residues Gly113 and 133-138 (IGDFVL) contribute to the S-adenosyl-L-methionine site.

This sequence belongs to the RNA methyltransferase TrmD family. Homodimer.

It is found in the cytoplasm. It catalyses the reaction guanosine(37) in tRNA + S-adenosyl-L-methionine = N(1)-methylguanosine(37) in tRNA + S-adenosyl-L-homocysteine + H(+). Specifically methylates guanosine-37 in various tRNAs. This chain is tRNA (guanine-N(1)-)-methyltransferase, found in Bacillus pumilus (strain SAFR-032).